Here is a 229-residue protein sequence, read N- to C-terminus: Enolase-phosphatase E1 (229 aa).

It belongs to the HAD-like hydrolase superfamily. MasA/MtnC family. As to quaternary structure, monomer. It depends on Mg(2+) as a cofactor.

It catalyses the reaction 5-methylsulfanyl-2,3-dioxopentyl phosphate + H2O = 1,2-dihydroxy-5-(methylsulfanyl)pent-1-en-3-one + phosphate. Its pathway is amino-acid biosynthesis; L-methionine biosynthesis via salvage pathway; L-methionine from S-methyl-5-thio-alpha-D-ribose 1-phosphate: step 3/6. It participates in amino-acid biosynthesis; L-methionine biosynthesis via salvage pathway; L-methionine from S-methyl-5-thio-alpha-D-ribose 1-phosphate: step 4/6. Its function is as follows. Bifunctional enzyme that catalyzes the enolization of 2,3-diketo-5-methylthiopentyl-1-phosphate (DK-MTP-1-P) into the intermediate 2-hydroxy-3-keto-5-methylthiopentenyl-1-phosphate (HK-MTPenyl-1-P), which is then dephosphorylated to form the acireductone 1,2-dihydroxy-3-keto-5-methylthiopentene (DHK-MTPene). The polypeptide is Enolase-phosphatase E1 (Yersinia pestis (strain Pestoides F)).